Reading from the N-terminus, the 146-residue chain is 3-hydroxyacyl-[acyl-carrier-protein] dehydratase FabZ (146 aa).

Histidine 49 is a catalytic residue.

Belongs to the thioester dehydratase family. FabZ subfamily.

It localises to the cytoplasm. It catalyses the reaction a (3R)-hydroxyacyl-[ACP] = a (2E)-enoyl-[ACP] + H2O. Involved in unsaturated fatty acids biosynthesis. Catalyzes the dehydration of short chain beta-hydroxyacyl-ACPs and long chain saturated and unsaturated beta-hydroxyacyl-ACPs. The chain is 3-hydroxyacyl-[acyl-carrier-protein] dehydratase FabZ from Pseudomonas syringae pv. tomato (strain ATCC BAA-871 / DC3000).